Here is a 370-residue protein sequence, read N- to C-terminus: DNA replication and repair protein RecF (370 aa).

An ATP-binding site is contributed by 30-37; sequence GENAQGKT.

This sequence belongs to the RecF family.

It localises to the cytoplasm. Functionally, the RecF protein is involved in DNA metabolism; it is required for DNA replication and normal SOS inducibility. RecF binds preferentially to single-stranded, linear DNA. It also seems to bind ATP. In Bacillus velezensis (strain DSM 23117 / BGSC 10A6 / LMG 26770 / FZB42) (Bacillus amyloliquefaciens subsp. plantarum), this protein is DNA replication and repair protein RecF.